Reading from the N-terminus, the 164-residue chain is MYIEMIDETNQVSEEIKNQTLDILEFAAQKTGKEDKEMAVTFVTNERSHELNLKYRDTNRPTDVISLEYKPESSLSFDEEDLADDPDLAEVLTEFDAYIGELFISVDKAREQAQEYGHSFEREMGFLAVHGFLHINGYDHYTPQEEKEMFSLQEEILDAYGLKR.

Histidine 130, histidine 134, and histidine 140 together coordinate Zn(2+).

The protein belongs to the endoribonuclease YbeY family. It depends on Zn(2+) as a cofactor.

The protein resides in the cytoplasm. In terms of biological role, single strand-specific metallo-endoribonuclease involved in late-stage 70S ribosome quality control and in maturation of the 3' terminus of the 16S rRNA. The chain is Endoribonuclease YbeY from Streptococcus mutans serotype c (strain ATCC 700610 / UA159).